The chain runs to 504 residues: Glycerol kinase (504 aa).

T12 provides a ligand contact to ADP. T12, T13, and S14 together coordinate ATP. T12 provides a ligand contact to sn-glycerol 3-phosphate. R16 is a binding site for ADP. Residues R82, E83, Y134, and D246 each contribute to the sn-glycerol 3-phosphate site. Positions 82, 83, 134, 246, and 247 each coordinate glycerol. The ADP site is built by T268 and G312. Residues T268, G312, Q316, and G413 each contribute to the ATP site. ADP-binding residues include G413 and N417.

This sequence belongs to the FGGY kinase family.

It carries out the reaction glycerol + ATP = sn-glycerol 3-phosphate + ADP + H(+). The protein operates within polyol metabolism; glycerol degradation via glycerol kinase pathway; sn-glycerol 3-phosphate from glycerol: step 1/1. Inhibited by fructose 1,6-bisphosphate (FBP). In terms of biological role, key enzyme in the regulation of glycerol uptake and metabolism. Catalyzes the phosphorylation of glycerol to yield sn-glycerol 3-phosphate. This Renibacterium salmoninarum (strain ATCC 33209 / DSM 20767 / JCM 11484 / NBRC 15589 / NCIMB 2235) protein is Glycerol kinase.